A 396-amino-acid chain; its full sequence is NADH-quinone oxidoreductase subunit D (396 aa).

Belongs to the complex I 49 kDa subunit family. NDH-1 is composed of 14 different subunits. Subunits NuoB, C, D, E, F, and G constitute the peripheral sector of the complex.

It localises to the cell inner membrane. It catalyses the reaction a quinone + NADH + 5 H(+)(in) = a quinol + NAD(+) + 4 H(+)(out). In terms of biological role, NDH-1 shuttles electrons from NADH, via FMN and iron-sulfur (Fe-S) centers, to quinones in the respiratory chain. The immediate electron acceptor for the enzyme in this species is believed to be ubiquinone. Couples the redox reaction to proton translocation (for every two electrons transferred, four hydrogen ions are translocated across the cytoplasmic membrane), and thus conserves the redox energy in a proton gradient. The chain is NADH-quinone oxidoreductase subunit D from Orientia tsutsugamushi (strain Boryong) (Rickettsia tsutsugamushi).